Here is a 314-residue protein sequence, read N- to C-terminus: Fructose-1,6-bisphosphatase class 1 (314 aa).

Mg(2+) contacts are provided by Glu91, Asp112, Leu114, and Asp115. Substrate contacts are provided by residues 115–118 (DGSS), Tyr223, and Lys254. Mg(2+) is bound at residue Glu260.

This sequence belongs to the FBPase class 1 family. Homotetramer. Requires Mg(2+) as cofactor.

Its subcellular location is the cytoplasm. It carries out the reaction beta-D-fructose 1,6-bisphosphate + H2O = beta-D-fructose 6-phosphate + phosphate. The protein operates within carbohydrate biosynthesis; gluconeogenesis. This Geobacter metallireducens (strain ATCC 53774 / DSM 7210 / GS-15) protein is Fructose-1,6-bisphosphatase class 1.